The primary structure comprises 160 residues: Probable chemoreceptor glutamine deamidase CheD (160 aa).

Belongs to the CheD family.

The catalysed reaction is L-glutaminyl-[protein] + H2O = L-glutamyl-[protein] + NH4(+). Functionally, probably deamidates glutamine residues to glutamate on methyl-accepting chemotaxis receptors (MCPs), playing an important role in chemotaxis. The chain is Probable chemoreceptor glutamine deamidase CheD from Desulfitobacterium hafniense (strain DSM 10664 / DCB-2).